The primary structure comprises 361 residues: MSGAAKRVVVGMSGGVDSSVTAWLLKQQGYEVIGLFMKNWEDDDDSEYCSTRQDWLDVVSVADLIGVDVEAVNFAAEYKDRVFADFLREYSAGRTPNPDVLCNAEIKFKAFLDHAMSLGAETIATGHYARVRQNAAGRFELLKALDHTKDQSYFLHRLNQAQLSRTLFPLGEIPKTRVREIAAEIGLPNAKKKDSTGICFIGERPFRDFLNRYLPTKPGPMKTPEGKVVGEHIGLAFYTLGQRKGIGLGGSRDGNGDAWYVARKDMANNTLYVVQGHDHPWLLTPVLNASDLSWVAGEPPAAGAAMAAKTRYRQSDAACTVQAVDADALSLGFAEPQWAVTPGQSAVLYDGDICLGGGIIQ.

ATP-binding positions include 11–18 (GMSGGVDS) and Met-37. The interval 97-99 (NPD) is interaction with target base in tRNA. Cys-102 functions as the Nucleophile in the catalytic mechanism. A disulfide bridge connects residues Cys-102 and Cys-199. Gly-126 contacts ATP. The interval 149–151 (KDQ) is interaction with tRNA. Residue Cys-199 is the Cysteine persulfide intermediate of the active site. The segment at 311–312 (RY) is interaction with tRNA.

Belongs to the MnmA/TRMU family.

It is found in the cytoplasm. The catalysed reaction is S-sulfanyl-L-cysteinyl-[protein] + uridine(34) in tRNA + AH2 + ATP = 2-thiouridine(34) in tRNA + L-cysteinyl-[protein] + A + AMP + diphosphate + H(+). Functionally, catalyzes the 2-thiolation of uridine at the wobble position (U34) of tRNA, leading to the formation of s(2)U34. This is tRNA-specific 2-thiouridylase MnmA from Cupriavidus taiwanensis (strain DSM 17343 / BCRC 17206 / CCUG 44338 / CIP 107171 / LMG 19424 / R1) (Ralstonia taiwanensis (strain LMG 19424)).